The sequence spans 142 residues: Large ribosomal subunit protein uL11 (142 aa).

The protein belongs to the universal ribosomal protein uL11 family. Part of the ribosomal stalk of the 50S ribosomal subunit. Interacts with L10 and the large rRNA to form the base of the stalk. L10 forms an elongated spine to which L12 dimers bind in a sequential fashion forming a multimeric L10(L12)X complex. In terms of processing, one or more lysine residues are methylated.

In terms of biological role, forms part of the ribosomal stalk which helps the ribosome interact with GTP-bound translation factors. This chain is Large ribosomal subunit protein uL11, found in Mycoplasma mycoides subsp. mycoides SC (strain CCUG 32753 / NCTC 10114 / PG1).